The primary structure comprises 355 residues: UDP-N-acetylglucosamine--N-acetylmuramyl-(pentapeptide) pyrophosphoryl-undecaprenol N-acetylglucosamine transferase (355 aa).

UDP-N-acetyl-alpha-D-glucosamine contacts are provided by residues 15–17, Asn127, Arg163, Ser191, Ile244, 263–268, and Gln288; these read TGG and ALTVSE.

This sequence belongs to the glycosyltransferase 28 family. MurG subfamily.

It is found in the cell inner membrane. The enzyme catalyses di-trans,octa-cis-undecaprenyl diphospho-N-acetyl-alpha-D-muramoyl-L-alanyl-D-glutamyl-meso-2,6-diaminopimeloyl-D-alanyl-D-alanine + UDP-N-acetyl-alpha-D-glucosamine = di-trans,octa-cis-undecaprenyl diphospho-[N-acetyl-alpha-D-glucosaminyl-(1-&gt;4)]-N-acetyl-alpha-D-muramoyl-L-alanyl-D-glutamyl-meso-2,6-diaminopimeloyl-D-alanyl-D-alanine + UDP + H(+). It functions in the pathway cell wall biogenesis; peptidoglycan biosynthesis. Its function is as follows. Cell wall formation. Catalyzes the transfer of a GlcNAc subunit on undecaprenyl-pyrophosphoryl-MurNAc-pentapeptide (lipid intermediate I) to form undecaprenyl-pyrophosphoryl-MurNAc-(pentapeptide)GlcNAc (lipid intermediate II). The polypeptide is UDP-N-acetylglucosamine--N-acetylmuramyl-(pentapeptide) pyrophosphoryl-undecaprenol N-acetylglucosamine transferase (Escherichia coli (strain K12 / MC4100 / BW2952)).